Consider the following 351-residue polypeptide: MSFPCKFVASFLLIFNVSSKGAVSKEITNALETWGALGQDINLDIPSFQMSDDIDDIKWEKTSDKKKIAQFRKEKETFKEKDTYKLFKNGTLKIKHLKTDDQDIYKVSIYDTKGKNVLEKIFDLKIQERVSKPKISWTCINTTLTCEVMNGTDPELNLYQDGKHLKLSQRVITHKWTTSLSAKFKCTAGNKVSKESSVEPVSCPEKGLDIYLIIGICGGGSLLMVFVALLVFYITKRKKQRSRRNDEELETRAHRVATEERGRKPHQIPASTPQNPATSQHPPPPPGHRSQAPSHRPPPPGHRVQHQPQKRPPAPSGTQVHQQKGPPLPRPRVQPKPPHGAAENSLSPSSN.

The signal sequence occupies residues 1–24; it reads MSFPCKFVASFLLIFNVSSKGAVS. Residues 25–128 form the Ig-like V-type domain; that stretch reads KEITNALETW…EKIFDLKIQE (104 aa). Topologically, residues 25-209 are extracellular; it reads KEITNALETW…PVSCPEKGLD (185 aa). Residues 61–75 form a CD58 binding region 1 region; it reads KTSDKKKIAQFRKEK. An N-linked (GlcNAc...) asparagine glycan is attached at N89. The segment at 106–120 is CD58 binding region 2; it reads KVSIYDTKGKNVLEK. In terms of domain architecture, Ig-like C2-type spans 129–209; the sequence is RVSKPKISWT…PVSCPEKGLD (81 aa). Intrachain disulfides connect C139/C203 and C146/C186. N-linked (GlcNAc...) asparagine glycans are attached at residues N141 and N150. Residues 210-235 traverse the membrane as a helical segment; it reads IYLIIGICGGGSLLMVFVALLVFYIT. Topologically, residues 236-351 are cytoplasmic; the sequence is KRKKQRSRRN…AENSLSPSSN (116 aa). Positions 237–351 are disordered; that stretch reads RKKQRSRRND…AENSLSPSSN (115 aa). The span at 243–262 shows a compositional bias: basic and acidic residues; sequence RRNDEELETRAHRVATEERG. Residues 269–280 are compositionally biased toward polar residues; the sequence is PASTPQNPATSQ. Positions 326–338 are enriched in pro residues; the sequence is PPLPRPRVQPKPP.

As to quaternary structure, interacts with CD48. Interacts with CD58 (LFA-3). Interacts with CD2AP. Interacts with PSTPIP1. Interacts with FCGR3A; this interaction modulates NK cell activation and cytotoxicity. In terms of tissue distribution, expressed in natural killer cells (at protein level).

Its subcellular location is the cell membrane. Its function is as follows. CD2 interacts with lymphocyte function-associated antigen CD58 (LFA-3) and CD48/BCM1 to mediate adhesion between T-cells and other cell types. CD2 is implicated in the triggering of T-cells, the cytoplasmic domain is implicated in the signaling function. This is T-cell surface antigen CD2 (CD2) from Homo sapiens (Human).